Reading from the N-terminus, the 467-residue chain is Tel2-interacting protein 2 (467 aa).

The stretch at Tyr-4–Asp-45 forms a coiled coil.

Belongs to the TTI2 family. As to quaternary structure, component of the TTT complex composed of tel2, tti1 and tti2. Interacts with tel2 and ttiI1. Component of the ASTRA complex composed of at least rvb1, rvb2, tra1, tel2, tti1 and tti2.

It is found in the nucleus. Its function is as follows. Component of the tel2-tti1-tti2 (TTT) complex that stabilizes protein levels of the phosphatidylinositol 3-kinase-related protein kinase (PIKK) family proteins. The TTT complex is involved in the cellular resistance to DNA damage stresses, like ionizing radiation (IR), ultraviolet (UV) and mitomycin C (MMC). Component of the ASTRA complex involved in chromatin remodeling. This Schizosaccharomyces pombe (strain 972 / ATCC 24843) (Fission yeast) protein is Tel2-interacting protein 2.